The following is a 351-amino-acid chain: S-adenosylmethionine:tRNA ribosyltransferase-isomerase (351 aa).

It belongs to the QueA family. In terms of assembly, monomer.

It localises to the cytoplasm. The enzyme catalyses 7-aminomethyl-7-carbaguanosine(34) in tRNA + S-adenosyl-L-methionine = epoxyqueuosine(34) in tRNA + adenine + L-methionine + 2 H(+). It participates in tRNA modification; tRNA-queuosine biosynthesis. In terms of biological role, transfers and isomerizes the ribose moiety from AdoMet to the 7-aminomethyl group of 7-deazaguanine (preQ1-tRNA) to give epoxyqueuosine (oQ-tRNA). This is S-adenosylmethionine:tRNA ribosyltransferase-isomerase from Hyphomonas neptunium (strain ATCC 15444).